Here is a 214-residue protein sequence, read N- to C-terminus: Putative glucose-6-phosphate isomerase 1 (214 aa).

Residues His92, His94, Glu101, and His140 each coordinate Fe cation.

Belongs to the archaeal-type GPI family. Homodimer. The cofactor is Fe cation.

It is found in the cytoplasm. The enzyme catalyses alpha-D-glucose 6-phosphate = beta-D-fructose 6-phosphate. It participates in carbohydrate degradation; glycolysis; D-glyceraldehyde 3-phosphate and glycerone phosphate from D-glucose: step 2/4. This chain is Putative glucose-6-phosphate isomerase 1 (pgiA1), found in Rhizobium meliloti (strain 1021) (Ensifer meliloti).